The chain runs to 96 residues: UPF0235 protein Sputcn32_2690 (96 aa).

Belongs to the UPF0235 family.

This chain is UPF0235 protein Sputcn32_2690, found in Shewanella putrefaciens (strain CN-32 / ATCC BAA-453).